The chain runs to 323 residues: GDSL esterase/lipase At5g03980 (323 aa).

The N-terminal stretch at 1–21 (MSTTKALSLLVFILFVSLVHS) is a signal peptide. The active-site Nucleophile is the serine 36. N-linked (GlcNAc...) asparagine glycosylation occurs at asparagine 77. Residues aspartate 294 and histidine 297 contribute to the active site.

Belongs to the 'GDSL' lipolytic enzyme family.

Its subcellular location is the secreted. This is GDSL esterase/lipase At5g03980 from Arabidopsis thaliana (Mouse-ear cress).